A 95-amino-acid chain; its full sequence is Putative ESAT-6-like protein X (95 aa).

A disordered region spans residues 72–95 (HGQKVQRASSSMADTDRSVSSAWS).

Belongs to the WXG100 family.

This is Putative ESAT-6-like protein X from Mycobacterium leprae (strain TN).